Consider the following 314-residue polypeptide: Fibrinogen-like protein 1 (314 aa).

The N-terminal stretch at 1–22 (MGEIRSFVLITVALILGKESWV) is a signal peptide. Positions 28-62 (CLQEQVRLRAQVRQLETRVKQQQVVIAQLLHEKEV) form a coiled coil. A Fibrinogen C-terminal domain is found at 76-308 (LGGKRHYADC…SVVMKIRPSD (233 aa)). 2 disulfides stabilise this stretch: Cys-85/Cys-114 and Cys-250/Cys-263.

Homodimer. Interacts (via the Fibrinogen C-terminal domain) with LAG3 (via Ig-like domains 1 and 2).

It localises to the secreted. Immune suppressive molecule that inhibits antigen-specific T-cell activation by acting as a major ligand of LAG3. Responsible for LAG3 T-cell inhibitory function. Binds LAG3 independently from MHC class II (MHC-II). Secreted by, and promotes growth of, hepatocytes. This Rattus norvegicus (Rat) protein is Fibrinogen-like protein 1.